A 187-amino-acid polypeptide reads, in one-letter code: Photosystem I assembly protein Ycf4 (187 aa).

2 helical membrane passes run 21 to 43 (LSNYWWAITIGLGSSGFILAGIS) and 69 to 91 (LLYGTIGFLLDIYLWLLILWNVG).

The protein belongs to the Ycf4 family.

It localises to the plastid. The protein localises to the cyanelle thylakoid membrane. Its function is as follows. Seems to be required for the assembly of the photosystem I complex. The chain is Photosystem I assembly protein Ycf4 from Cyanophora paradoxa.